The following is a 164-amino-acid chain: Cyanate hydratase (164 aa).

Residues Arg104, Glu107, and Ser130 contribute to the active site.

It belongs to the cyanase family.

It catalyses the reaction cyanate + hydrogencarbonate + 3 H(+) = NH4(+) + 2 CO2. Its function is as follows. Catalyzes the reaction of cyanate with bicarbonate to produce ammonia and carbon dioxide. The protein is Cyanate hydratase of Botryotinia fuckeliana (strain B05.10) (Noble rot fungus).